A 31-amino-acid chain; its full sequence is Photosystem II reaction center protein T (31 aa).

A helical transmembrane segment spans residues 3 to 23 (SVAYILVLTMALSVIFFAIAF).

This sequence belongs to the PsbT family. In terms of assembly, PSII is composed of 1 copy each of membrane proteins PsbA, PsbB, PsbC, PsbD, PsbE, PsbF, PsbH, PsbI, PsbJ, PsbK, PsbL, PsbM, PsbT, PsbX, PsbY, PsbZ, Psb30/Ycf12, peripheral proteins PsbO, CyanoQ (PsbQ), PsbU, PsbV and a large number of cofactors. It forms dimeric complexes.

The protein resides in the cellular thylakoid membrane. Functionally, found at the monomer-monomer interface of the photosystem II (PS II) dimer, plays a role in assembly and dimerization of PSII. PSII is a light-driven water plastoquinone oxidoreductase, using light energy to abstract electrons from H(2)O, generating a proton gradient subsequently used for ATP formation. The chain is Photosystem II reaction center protein T from Microcystis aeruginosa (strain NIES-843 / IAM M-2473).